Reading from the N-terminus, the 361-residue chain is Probable cytosolic iron-sulfur protein assembly protein 1 (361 aa).

WD repeat units lie at residues 10–49 (AHSDKAWSVSAHKTVPLLATASTDKTSKIYKLSVKQNFPQ), 56–105 (THKR…TEIL), 120–160 (GHEN…EEFE), 167–206 (DHQHDIKHVVWHPHQNLLASSSYDDTIRLYKQDLDDDDWS), 213–265 (GHEG…SIKH), 280–319 (VHQYPIYSVAWSAQSGKIATVGSDGKIVIYIEGDDNSWSI), and 327–361 (HGVHEINSIIWALLDDQSEVLVTAGDDGCVNIWKP).

The protein belongs to the WD repeat CIA1 family. In terms of assembly, interacts with NAR1.

The protein resides in the cytoplasm. Its subcellular location is the nucleus. In terms of biological role, essential component of the cytosolic iron-sulfur (Fe/S) protein assembly machinery. Required for the maturation of extramitochondrial Fe/S proteins. In Scheffersomyces stipitis (strain ATCC 58785 / CBS 6054 / NBRC 10063 / NRRL Y-11545) (Yeast), this protein is Probable cytosolic iron-sulfur protein assembly protein 1.